The following is a 613-amino-acid chain: DNA polymerase II small subunit (613 aa).

This sequence belongs to the DNA polymerase delta/II small subunit family. As to quaternary structure, heterodimer of a large subunit and a small subunit.

It catalyses the reaction DNA(n) + a 2'-deoxyribonucleoside 5'-triphosphate = DNA(n+1) + diphosphate. The enzyme catalyses Exonucleolytic cleavage in the 3'- to 5'-direction to yield nucleoside 5'-phosphates.. Its function is as follows. Possesses two activities: a DNA synthesis (polymerase) and an exonucleolytic activity that degrades single-stranded DNA in the 3' to 5' direction. Has a template-primer preference which is characteristic of a replicative DNA polymerase. The polypeptide is DNA polymerase II small subunit (polB) (Pyrococcus furiosus (strain ATCC 43587 / DSM 3638 / JCM 8422 / Vc1)).